A 484-amino-acid chain; its full sequence is Glycogen synthase (484 aa).

Residue lysine 15 coordinates ADP-alpha-D-glucose.

This sequence belongs to the glycosyltransferase 1 family. Bacterial/plant glycogen synthase subfamily.

The catalysed reaction is [(1-&gt;4)-alpha-D-glucosyl](n) + ADP-alpha-D-glucose = [(1-&gt;4)-alpha-D-glucosyl](n+1) + ADP + H(+). It participates in glycan biosynthesis; glycogen biosynthesis. In terms of biological role, synthesizes alpha-1,4-glucan chains using ADP-glucose. The chain is Glycogen synthase from Geotalea daltonii (strain DSM 22248 / JCM 15807 / FRC-32) (Geobacter daltonii).